Reading from the N-terminus, the 274-residue chain is Rhamnulose-1-phosphate aldolase (274 aa).

Glu117 is an active-site residue. Residues His141, His143, and His212 each coordinate Zn(2+).

The protein belongs to the aldolase class II family. RhaD subfamily. As to quaternary structure, homotetramer. It depends on Zn(2+) as a cofactor.

Its subcellular location is the cytoplasm. It catalyses the reaction L-rhamnulose 1-phosphate = (S)-lactaldehyde + dihydroxyacetone phosphate. Its pathway is carbohydrate degradation; L-rhamnose degradation; glycerone phosphate from L-rhamnose: step 3/3. Functionally, catalyzes the reversible cleavage of L-rhamnulose-1-phosphate to dihydroxyacetone phosphate (DHAP) and L-lactaldehyde. This chain is Rhamnulose-1-phosphate aldolase, found in Escherichia coli (strain K12 / MC4100 / BW2952).